The primary structure comprises 106 residues: Large ribosomal subunit protein eL42 (106 aa).

The segment at 37-56 (SQGKRRYDRKQSGYGGQTKP) is disordered.

The protein belongs to the eukaryotic ribosomal protein eL42 family.

In Pichia kudriavzevii (Yeast), this protein is Large ribosomal subunit protein eL42 (RPL44).